The sequence spans 216 residues: Octanoyltransferase (216 aa).

Residues 29 to 209 (DRAGECVWLL…SFDAVFGPCP (181 aa)) form the BPL/LPL catalytic domain. Residues 68–75 (RGGQYTYH), 140–142 (AIG), and 153–155 (GFA) contribute to the substrate site. Catalysis depends on C171, which acts as the Acyl-thioester intermediate.

Belongs to the LipB family.

It is found in the cytoplasm. It catalyses the reaction octanoyl-[ACP] + L-lysyl-[protein] = N(6)-octanoyl-L-lysyl-[protein] + holo-[ACP] + H(+). It functions in the pathway protein modification; protein lipoylation via endogenous pathway; protein N(6)-(lipoyl)lysine from octanoyl-[acyl-carrier-protein]: step 1/2. Catalyzes the transfer of endogenously produced octanoic acid from octanoyl-acyl-carrier-protein onto the lipoyl domains of lipoate-dependent enzymes. Lipoyl-ACP can also act as a substrate although octanoyl-ACP is likely to be the physiological substrate. This is Octanoyltransferase from Rhodospirillum rubrum (strain ATCC 11170 / ATH 1.1.1 / DSM 467 / LMG 4362 / NCIMB 8255 / S1).